The chain runs to 430 residues: Enolase (430 aa).

Q163 is a (2R)-2-phosphoglycerate binding site. The Proton donor role is filled by E205. The Mg(2+) site is built by D242, E287, and D314. (2R)-2-phosphoglycerate-binding residues include K339, R368, S369, and K390. K339 acts as the Proton acceptor in catalysis.

The protein belongs to the enolase family. Requires Mg(2+) as cofactor.

The protein resides in the cytoplasm. It is found in the secreted. It localises to the cell surface. The enzyme catalyses (2R)-2-phosphoglycerate = phosphoenolpyruvate + H2O. It functions in the pathway carbohydrate degradation; glycolysis; pyruvate from D-glyceraldehyde 3-phosphate: step 4/5. Catalyzes the reversible conversion of 2-phosphoglycerate (2-PG) into phosphoenolpyruvate (PEP). It is essential for the degradation of carbohydrates via glycolysis. The chain is Enolase from Geobacillus sp. (strain WCH70).